A 123-amino-acid chain; its full sequence is Large ribosomal subunit protein uL18 (123 aa).

This sequence belongs to the universal ribosomal protein uL18 family. In terms of assembly, part of the 50S ribosomal subunit; part of the 5S rRNA/L5/L18/L25 subcomplex. Contacts the 5S and 23S rRNAs.

This is one of the proteins that bind and probably mediate the attachment of the 5S RNA into the large ribosomal subunit, where it forms part of the central protuberance. This chain is Large ribosomal subunit protein uL18, found in Symbiobacterium thermophilum (strain DSM 24528 / JCM 14929 / IAM 14863 / T).